The chain runs to 593 residues: Arylsulfatase D (593 aa).

Positions 1–33 are cleaved as a signal peptide; it reads MRSAARRGRAAPAARDSLPVLLFLCLLLKTCEP. 2 residues coordinate Ca(2+): aspartate 49 and aspartate 50. Asparagine 61 carries an N-linked (GlcNAc...) asparagine glycan. Cysteine 89 is a Ca(2+) binding site. The Nucleophile role is filled by cysteine 89. Cysteine 89 bears the 3-oxoalanine (Cys) mark. The N-linked (GlcNAc...) asparagine glycan is linked to asparagine 128. Residue lysine 148 participates in substrate binding. The active site involves histidine 150. Position 304 (histidine 304) interacts with substrate. N-linked (GlcNAc...) asparagine glycosylation occurs at asparagine 347. Residues aspartate 356 and histidine 357 each coordinate Ca(2+). Lysine 381 lines the substrate pocket.

This sequence belongs to the sulfatase family. Ca(2+) serves as cofactor. Post-translationally, the conversion to 3-oxoalanine (also known as C-formylglycine, FGly), of a serine or cysteine residue in prokaryotes and of a cysteine residue in eukaryotes, is critical for catalytic activity. As to expression, expressed in the pancreas, kidney, liver, lung, placenta, brain and heart.

It localises to the lysosome. The protein is Arylsulfatase D (ARSD) of Homo sapiens (Human).